Reading from the N-terminus, the 1071-residue chain is V-type proton ATPase catalytic subunit A (1071 aa).

N-acetylalanine is present on A2. T131 bears the Phosphothreonine mark. ATP is bound at residue 257 to 264; it reads GAFGCGKT. The DOD-type homing endonuclease domain maps to 494–642; that stretch reads LLGLWIGDGL…LVSLARSLGL (149 aa). 2 positions are modified to phosphoserine: S858 and S928.

It belongs to the ATPase alpha/beta chains family. As to quaternary structure, V-ATPase is a heteromultimeric enzyme composed of a peripheral catalytic V1 complex (components A to H) attached to an integral membrane V0 proton pore complex (components: a, c, c', c'', d, e, f and VOA1). Interacts with RAV1 and RAV2 components of the RAVE complex, which are essential for the stability and assembly of V-ATPase. This protein undergoes a protein self splicing that involves a post-translational excision of the VDE intervening region (intein) followed by peptide ligation.

The protein resides in the vacuole membrane. It carries out the reaction ATP + H2O + 4 H(+)(in) = ADP + phosphate + 5 H(+)(out). Its function is as follows. Catalytic subunit of the V1 complex of vacuolar(H+)-ATPase (V-ATPase), a multisubunit enzyme composed of a peripheral complex (V1) that hydrolyzes ATP and a membrane integral complex (V0) that translocates protons. V-ATPase is responsible for acidifying and maintaining the pH of intracellular compartments. Functionally, PI-SceI is an endonuclease that can cleave at a site present in a VMA1 allele that lacks the derived endonuclease segment of the open reading frame; cleavage at this site only occurs during meiosis and initiates 'homing', a genetic event that converts a VMA1 allele lacking VDE into one that contains it. In Saccharomyces cerevisiae (strain ATCC 204508 / S288c) (Baker's yeast), this protein is V-type proton ATPase catalytic subunit A.